The primary structure comprises 994 residues: Cation-chloride cotransporter 2 (994 aa).

The interval 1-28 (MERGGFGGAGRHDEEAPAMRPAPQQRYR) is disordered. Residues 1–139 (MERGGFGGAG…GHPKETETKL (139 aa)) lie on the Cytoplasmic side of the membrane. Residues 140–160 (DTMMGVFVPCLQNILGIIYYI) traverse the membrane as a helical segment. Over 161–174 (RFTWIVGMGGVWQS) the chain is Extracellular. A helical membrane pass occupies residues 175–195 (LVLVAFCGSCTFLTTISLSAI). Over 196–221 (ATNGAMKGGGPYYLIGRALGPEVGVS) the chain is Cytoplasmic. Residues 222-242 (IGLCFFLGNAVAGAMYVLGAV) traverse the membrane as a helical segment. At 243 to 287 (ETFLDAVPSAEFFQESVTVVTNTFVNGTAAGNATTISTPNLHDLQ) the chain is on the extracellular side. N-linked (GlcNAc...) asparagine glycans are attached at residues Asn268 and Asn274. The chain crosses the membrane as a helical span at residues 288–308 (VYGIIVTILLCFIVFGGVKII). At 309–311 (NKV) the chain is on the cytoplasmic side. A helical transmembrane segment spans residues 312-332 (APAFLIPVLFSILCIYIGVFI). Over 333 to 372 (APRPNASKWITGLSITTLKDNWSSDYQRTNNAGVPDPNGS) the chain is Extracellular. N-linked (GlcNAc...) asparagine glycans are attached at residues Asn337, Asn353, and Asn370. A helical membrane pass occupies residues 373 to 393 (IYWDFNALLGLYFPAVTGIMA). The Cytoplasmic segment spans residues 394-412 (GSNRSASLKDTQRSIPIGT). Residues 413-433 (LHATISTTMMYLLSVFLFGAL) form a helical membrane-spanning segment. Topologically, residues 434–448 (STREGLLTDRLLCAA) are extracellular. A helical membrane pass occupies residues 449-469 (VAWPSPAVVYAGIILSTLGAA). Over 470 to 505 (LQSLTGAPRLLAAIANDDILPVLNYFKAYEGSEPHV) the chain is Cytoplasmic. Residues 506-526 (ATLFTSFICISCVIIGNLDVI) traverse the membrane as a helical segment. Residues 527-529 (TPT) are Extracellular-facing. Residues 530 to 552 (ITMFFLLCYAGVNLSCFLLDLLD) form a helical membrane-spanning segment. Residues 553 to 558 (APSWRP) are Cytoplasmic-facing. Residues 559-579 (RWKLHHWSLSLIGALLCIVIM) form a helical membrane-spanning segment. At 580 to 585 (FMISWT) the chain is on the extracellular side. Residues 586–606 (FTVVSLALASLIYYYVSLKGK) traverse the membrane as a helical segment. Over 607–994 (AGDWGDGFKS…YRRDVVTLFT (388 aa)) the chain is Cytoplasmic.

The protein belongs to the SLC12A transporter family.

Its subcellular location is the membrane. Functionally, probable cation/chloride cotransporter. The polypeptide is Cation-chloride cotransporter 2 (CCC2) (Oryza sativa subsp. japonica (Rice)).